We begin with the raw amino-acid sequence, 237 residues long: tRNA1(Val) (adenine(37)-N6)-methyltransferase (237 aa).

Belongs to the methyltransferase superfamily. tRNA (adenine-N(6)-)-methyltransferase family.

It is found in the cytoplasm. The enzyme catalyses adenosine(37) in tRNA1(Val) + S-adenosyl-L-methionine = N(6)-methyladenosine(37) in tRNA1(Val) + S-adenosyl-L-homocysteine + H(+). In terms of biological role, specifically methylates the adenine in position 37 of tRNA(1)(Val) (anticodon cmo5UAC). The sequence is that of tRNA1(Val) (adenine(37)-N6)-methyltransferase from Bacteroides fragilis (strain YCH46).